The sequence spans 1380 residues: Protein TORNADO 1 (1380 aa).

LRR repeat units follow at residues phenylalanine 26–isoleucine 46, threonine 47–leucine 70, threonine 105–arginine 132, asparagine 161–arginine 184, asparagine 266–tryptophan 289, glutamate 299–asparagine 322, lysine 323–proline 346, serine 348–threonine 371, isoleucine 446–lysine 472, and asparagine 476–alanine 502. The region spanning proline 493–isoleucine 702 is the Roc domain. Residues glycine 506–threonine 513 and asparagine 567–glutamine 571 each bind GTP. The chain crosses the membrane as a helical span at residues phenylalanine 574–leucine 594. LRR repeat units follow at residues leucine 640 to aspartate 665, valine 688 to leucine 712, leucine 799 to lysine 826, glutamine 1023 to aspartate 1046, glutamate 1131 to leucine 1154, and glutamine 1229 to lysine 1254. Position 641 to 644 (threonine 641 to glutamate 644) interacts with GTP. Residues asparagine 757–methionine 931 form the COR domain. 2 helical membrane passes run leucine 1255–proline 1275 and proline 1287–glycine 1307.

As to expression, expressed in seedlings, roots, leaves, stems and flowers. Present in ovules, prominently in nucellus and integuments.

The protein localises to the membrane. Involved in the basipetal transport of auxin (IAA) that modulates growth and organs organization. Required for initial divisions in the epidermal/lateral root cap leading to the formation of epidermal cells and a clone of lateral root cap cells, as well as for the maintenance of the radial pattern of cell specification in the root, thus regulating the distinction between the lateral root cap and epidermis. In Arabidopsis thaliana (Mouse-ear cress), this protein is Protein TORNADO 1 (TRN1).